Consider the following 451-residue polypeptide: Glucose-6-phosphate isomerase (451 aa).

Thr38 carries the phosphothreonine modification. The active-site Proton donor is Glu290. Residues His311 and Lys425 contribute to the active site.

This sequence belongs to the GPI family.

The protein localises to the cytoplasm. It catalyses the reaction alpha-D-glucose 6-phosphate = beta-D-fructose 6-phosphate. Its pathway is carbohydrate biosynthesis; gluconeogenesis. It participates in carbohydrate degradation; glycolysis; D-glyceraldehyde 3-phosphate and glycerone phosphate from D-glucose: step 2/4. Functionally, catalyzes the reversible isomerization of glucose-6-phosphate to fructose-6-phosphate. The protein is Glucose-6-phosphate isomerase of Shouchella clausii (strain KSM-K16) (Alkalihalobacillus clausii).